Consider the following 360-residue polypeptide: MSSSNLSSILRNSRIAQVPKPKGPLFSPDKKYVPTHQLIENKASTMHRQEWGMKSSIPSRSKSRYLIFDELDTQQRLTSFEAIGQYQWNRIRIQELGVVPERATAGNSFQTSADANAPSNPLFSGFSSRLSARTPLSSFFGLTSKSDAKQWKAAEKKVAALRPAFKKWLQDHHPHLIIHKDQMDPADFRKRAVEFITEIATRSSGAGGSWKVVGNGGLTYGLKGRLQQSPLGIKQNTVVEGRILQTNGMEKSVAAAGFVGNGMLGTNLRKVDYAMGDLVRTARFPFEVKQARLLENGRLLMDMSLIEPKNTARKYGYGAKENKNRTYIFQRGAVNERKISSEESAQQAEELLNILTNFEN.

The span at 1-15 shows a compositional bias: low complexity; it reads MSSSNLSSILRNSRI. The interval 1-31 is disordered; sequence MSSSNLSSILRNSRIAQVPKPKGPLFSPDKK.

This sequence belongs to the bacterial ribosomal protein bS1 family. Component of the mitochondrial small ribosomal subunit.

The protein resides in the mitochondrion. Functionally, involved in mitochondrial genome encoded proteins translation. The chain is Small ribosomal subunit protein bS1m (MRP51) from Eremothecium gossypii (strain ATCC 10895 / CBS 109.51 / FGSC 9923 / NRRL Y-1056) (Yeast).